A 367-amino-acid polypeptide reads, in one-letter code: Lipoyl synthase 2, chloroplastic (367 aa).

Residues cysteine 84, cysteine 89, cysteine 95, cysteine 121, cysteine 125, cysteine 128, and serine 336 each coordinate [4Fe-4S] cluster. The region spanning 104–325 (GEGDGIATAT…KEYGESVGFR (222 aa)) is the Radical SAM core domain.

The protein belongs to the radical SAM superfamily. Lipoyl synthase family. Requires [4Fe-4S] cluster as cofactor.

It is found in the plastid. Its subcellular location is the chloroplast. The catalysed reaction is [[Fe-S] cluster scaffold protein carrying a second [4Fe-4S](2+) cluster] + N(6)-octanoyl-L-lysyl-[protein] + 2 oxidized [2Fe-2S]-[ferredoxin] + 2 S-adenosyl-L-methionine + 4 H(+) = [[Fe-S] cluster scaffold protein] + N(6)-[(R)-dihydrolipoyl]-L-lysyl-[protein] + 4 Fe(3+) + 2 hydrogen sulfide + 2 5'-deoxyadenosine + 2 L-methionine + 2 reduced [2Fe-2S]-[ferredoxin]. Its pathway is protein modification; protein lipoylation via endogenous pathway; protein N(6)-(lipoyl)lysine from octanoyl-[acyl-carrier-protein]: step 2/2. Functionally, catalyzes the radical-mediated insertion of two sulfur atoms into the C-6 and C-8 positions of the octanoyl moiety bound to the lipoyl domains of lipoate-dependent enzymes, thereby converting the octanoylated domains into lipoylated derivatives. The protein is Lipoyl synthase 2, chloroplastic of Zea mays (Maize).